The following is a 723-amino-acid chain: Calpastatin (723 aa).

Disordered regions lie at residues 1–402 and 422–509; these read MNPT…PGRC and STHS…LPPL. A compositionally biased stretch (basic residues) spans 21 to 30; the sequence is PNKKRHKKQA. A Glycyl lysine isopeptide (Lys-Gly) (interchain with G-Cter in SUMO2) cross-link involves residue Lys32. Residues 46 to 84 are compositionally biased toward basic and acidic residues; the sequence is VVHEKKTQEVKPKEHTEPKSQPKHPSDTRSKHAPKEKAV. The residue at position 50 (Lys50) is an N6-acetyllysine. 2 stretches are compositionally biased toward low complexity: residues 85–94 and 113–125; these read SKSSEQPPSE and SAVPAVAAAASAE. Ser87 carries the post-translational modification Phosphoserine. Thr137 carries the phosphothreonine modification. The span at 157 to 173 shows a compositional bias: acidic residues; the sequence is TALDDLIDTLGEPEETK. Residues 171–224 form an Inhibitory domain 1 repeat; that stretch reads ETKEDTTTYTGPEVSDPMSSTYIEELGKREVTLPPKYRELLNKEEGIAGPPPDS. A compositionally biased stretch (basic and acidic residues) spans 195–216; that stretch reads ELGKREVTLPPKYRELLNKEEG. A phosphoserine mark is found at Ser224 and Ser245. Basic and acidic residues-rich tracts occupy residues 249–263 and 306–367; these read DAKKTEKEKSTEEAL and PRPE…KPLS. An Inhibitory domain 2 repeat occupies 307-359; sequence RPELDPSSIKEVDEAKAKEEKVKKCGEDEERVPSEYRLKPATDKDGKPLLPEA. Phosphoserine is present on residues Ser367, Ser369, and Ser376. Positions 378 to 396 are enriched in basic and acidic residues; the sequence is DFDRSKCKEKQSKPTEKNR. Ser443 carries the phosphoserine modification. Residues 445 to 504 are compositionally biased toward basic and acidic residues; the sequence is GKKEADPEDGKPVEDKVKEKAKEEDREKLGEREETIPPDYRLEEAKDKDGKPLPPKEVKE. The stretch at 449–502 is one Inhibitory domain 3 repeat; it reads ADPEDGKPVEDKVKEKAKEEDREKLGEREETIPPDYRLEEAKDKDGKPLPPKEV. A phosphoserine mark is found at Ser519 and Ser530. The tract at residues 547–723 is disordered; the sequence is SQTPAPTTQA…KPKADGKSTS (177 aa). A compositionally biased stretch (low complexity) spans 548–560; that stretch reads QTPAPTTQAAGPP. Over residues 562-571 the composition is skewed to basic and acidic residues; that stretch reads DSARDNKELD. 2 positions are modified to phosphoserine: Ser578 and Ser580. An Inhibitory domain 4 repeat occupies 586 to 642; the sequence is PDPDEHKPVEDKVKEKAKAEHRDKLGERDDTIPPKYQHLLDDNKEGTPGKPKRSESP. A compositionally biased stretch (basic and acidic residues) spans 586–643; it reads PDPDEHKPVEDKVKEKAKAEHRDKLGERDDTIPPKYQHLLDDNKEGTPGKPKRSESPR. A compositionally biased stretch (polar residues) spans 653-670; sequence NLQVPRTPLTPSQGTWTA. Over residues 672-690 the composition is skewed to low complexity; that stretch reads PQLQKPQQTQQRTKTRSLL. The segment covering 701–723 has biased composition (basic and acidic residues); it reads KAKDSTKAKEETSKPKADGKSTS.

The protein belongs to the protease inhibitor I27 (calpastatin) family.

Functionally, specific inhibition of calpain (calcium-dependent cysteine protease). Plays a key role in postmortem tenderization of meat and have been proposed to be involved in muscle protein degradation in living tissue. In Ovis aries (Sheep), this protein is Calpastatin (CAST).